The sequence spans 225 residues: Phosphatidylserine decarboxylase proenzyme (225 aa).

Catalysis depends on S188, which acts as the Schiff-base intermediate with substrate; via pyruvic acid. S188 bears the Pyruvic acid (Ser); by autocatalysis mark.

Belongs to the phosphatidylserine decarboxylase family. PSD-A subfamily. As to quaternary structure, heterodimer of a large membrane-associated beta subunit and a small pyruvoyl-containing alpha subunit. Requires pyruvate as cofactor. Post-translationally, is synthesized initially as an inactive proenzyme. Formation of the active enzyme involves a self-maturation process in which the active site pyruvoyl group is generated from an internal serine residue via an autocatalytic post-translational modification. Two non-identical subunits are generated from the proenzyme in this reaction, and the pyruvate is formed at the N-terminus of the alpha chain, which is derived from the carboxyl end of the proenzyme. The post-translation cleavage follows an unusual pathway, termed non-hydrolytic serinolysis, in which the side chain hydroxyl group of the serine supplies its oxygen atom to form the C-terminus of the beta chain, while the remainder of the serine residue undergoes an oxidative deamination to produce ammonia and the pyruvoyl prosthetic group on the alpha chain.

Its subcellular location is the cell membrane. The catalysed reaction is a 1,2-diacyl-sn-glycero-3-phospho-L-serine + H(+) = a 1,2-diacyl-sn-glycero-3-phosphoethanolamine + CO2. It functions in the pathway phospholipid metabolism; phosphatidylethanolamine biosynthesis; phosphatidylethanolamine from CDP-diacylglycerol: step 2/2. Its function is as follows. Catalyzes the formation of phosphatidylethanolamine (PtdEtn) from phosphatidylserine (PtdSer). The sequence is that of Phosphatidylserine decarboxylase proenzyme from Parvibaculum lavamentivorans (strain DS-1 / DSM 13023 / NCIMB 13966).